Reading from the N-terminus, the 76-residue chain is Small ribosomal subunit protein bS18 (76 aa).

It belongs to the bacterial ribosomal protein bS18 family. As to quaternary structure, part of the 30S ribosomal subunit. Forms a tight heterodimer with protein bS6.

Binds as a heterodimer with protein bS6 to the central domain of the 16S rRNA, where it helps stabilize the platform of the 30S subunit. This chain is Small ribosomal subunit protein bS18, found in Ectopseudomonas mendocina (strain ymp) (Pseudomonas mendocina).